The sequence spans 60 residues: Large ribosomal subunit protein uL30 (60 aa).

It belongs to the universal ribosomal protein uL30 family. Part of the 50S ribosomal subunit.

The sequence is that of Large ribosomal subunit protein uL30 from Lachnoclostridium phytofermentans (strain ATCC 700394 / DSM 18823 / ISDg) (Clostridium phytofermentans).